The following is a 448-amino-acid chain: JmjC domain-containing protein D (448 aa).

The region spanning 305–448 is the JmjC domain; the sequence is EQIPQLRNDI…SLSQSFSIFP (144 aa).

This Dictyostelium discoideum (Social amoeba) protein is JmjC domain-containing protein D (jcdD).